Reading from the N-terminus, the 378-residue chain is MSHVDDGFRSLTLKRFPQTDDVNPLLAWEAADEYLLQQLDETEIRGPVLILNDTFGALSCALAEHSPYSIGDSYLSELGTRENLRHNGIAESSVTFLDSTADYPQAPGVVLIKVPKTLALLEQQLRALRKVVTVQTRIIAGAKARDIHTSTLELFEKVLGPTTTTLAWKKARLINCTFSHPQLADAPQTLSWKLEDTGWTIHNHANVFSRTGLDIGARFFMQHLPENLDGEIVDLGCGNGVIGLSLLAKNPQANVVFVDESPMAVDSSRLNVETNLPEAFERCEFMINNALSGVEPFRFNAVFCNPPFHQKHALTDNIAWEMFHHARRCLKINGELYIVANRHLDYFHKLKKIFGNCATIATNNKFVILKAVKQGRRR.

It belongs to the methyltransferase superfamily. RlmG family.

It is found in the cytoplasm. The catalysed reaction is guanosine(1835) in 23S rRNA + S-adenosyl-L-methionine = N(2)-methylguanosine(1835) in 23S rRNA + S-adenosyl-L-homocysteine + H(+). Specifically methylates the guanine in position 1835 (m2G1835) of 23S rRNA. This is Ribosomal RNA large subunit methyltransferase G from Salmonella paratyphi B (strain ATCC BAA-1250 / SPB7).